The primary structure comprises 290 residues: Shikimate dehydrogenase (NADP(+)) (290 aa).

Shikimate contacts are provided by residues 18-20 (SYS) and T66. Catalysis depends on K70, which acts as the Proton acceptor. NADP(+) is bound at residue E82. Residues N91 and D106 each contribute to the shikimate site. NADP(+) contacts are provided by residues 130 to 134 (GSGGA) and M229. Y231 serves as a coordination point for shikimate. G252 serves as a coordination point for NADP(+).

The protein belongs to the shikimate dehydrogenase family. As to quaternary structure, homodimer.

The catalysed reaction is shikimate + NADP(+) = 3-dehydroshikimate + NADPH + H(+). It functions in the pathway metabolic intermediate biosynthesis; chorismate biosynthesis; chorismate from D-erythrose 4-phosphate and phosphoenolpyruvate: step 4/7. Functionally, involved in the biosynthesis of the chorismate, which leads to the biosynthesis of aromatic amino acids. Catalyzes the reversible NADPH linked reduction of 3-dehydroshikimate (DHSA) to yield shikimate (SA). The protein is Shikimate dehydrogenase (NADP(+)) of Chlorobium phaeovibrioides (strain DSM 265 / 1930) (Prosthecochloris vibrioformis (strain DSM 265)).